The primary structure comprises 230 residues: Endonuclease NucS (230 aa).

The protein belongs to the NucS endonuclease family.

It is found in the cytoplasm. In terms of biological role, cleaves both 3' and 5' ssDNA extremities of branched DNA structures. This Corynebacterium glutamicum (strain ATCC 13032 / DSM 20300 / JCM 1318 / BCRC 11384 / CCUG 27702 / LMG 3730 / NBRC 12168 / NCIMB 10025 / NRRL B-2784 / 534) protein is Endonuclease NucS.